The primary structure comprises 82 residues: ATP synthase subunit c (82 aa).

Transmembrane regions (helical) follow at residues 7–27 and 57–77; these read AASV…PGIG and FAFM…LLFA.

The protein belongs to the ATPase C chain family. In terms of assembly, F-type ATPases have 2 components, F(1) - the catalytic core - and F(0) - the membrane proton channel. F(1) has five subunits: alpha(3), beta(3), gamma(1), delta(1), epsilon(1). F(0) has four main subunits: a(1), b(1), b'(1) and c(10-14). The alpha and beta chains form an alternating ring which encloses part of the gamma chain. F(1) is attached to F(0) by a central stalk formed by the gamma and epsilon chains, while a peripheral stalk is formed by the delta, b and b' chains.

Its subcellular location is the cellular thylakoid membrane. F(1)F(0) ATP synthase produces ATP from ADP in the presence of a proton or sodium gradient. F-type ATPases consist of two structural domains, F(1) containing the extramembraneous catalytic core and F(0) containing the membrane proton channel, linked together by a central stalk and a peripheral stalk. During catalysis, ATP synthesis in the catalytic domain of F(1) is coupled via a rotary mechanism of the central stalk subunits to proton translocation. In terms of biological role, key component of the F(0) channel; it plays a direct role in translocation across the membrane. A homomeric c-ring of between 10-14 subunits forms the central stalk rotor element with the F(1) delta and epsilon subunits. This is ATP synthase subunit c from Prochlorococcus marinus (strain NATL1A).